Reading from the N-terminus, the 351-residue chain is MLKNDLFLRALKRQPVPRTPIWVMRQAGRYLPEYRAIREKTDFLTLCKTPELATEVTIQPVDIIGVDAAIIFSDILVVNEAMGMNVEIIESKGIRLSPPIRSQVDIDRLIIPDINEKLGYVMDALRMTKKELDGRVPLIGFSGAAWTLFTYAVEGGGSKNYAFAKKMMYREPKMAHMLLSKISRVITEYLLMQIEAGADAVQIFDSWASALSEDDYREFALPYIKESVQAVKTKYPDTPVIVFSKDCNTILSDIADTGCDAMGLGWNMDISKARAELKDRVTIQGNMDPTVLYGTHDKIRAEAGKILERFGQHSECSGHVFNLGHGILPDVDPENLKCLVDFVKEESTKYH.

Substrate is bound by residues 25–29 (RQAGR), Asp-74, Tyr-151, Ser-206, and His-325.

This sequence belongs to the uroporphyrinogen decarboxylase family. As to quaternary structure, homodimer.

The protein localises to the cytoplasm. It catalyses the reaction uroporphyrinogen III + 4 H(+) = coproporphyrinogen III + 4 CO2. It participates in porphyrin-containing compound metabolism; protoporphyrin-IX biosynthesis; coproporphyrinogen-III from 5-aminolevulinate: step 4/4. Its function is as follows. Catalyzes the decarboxylation of four acetate groups of uroporphyrinogen-III to yield coproporphyrinogen-III. This is Uroporphyrinogen decarboxylase from Chlorobium phaeobacteroides (strain BS1).